Reading from the N-terminus, the 169-residue chain is Nucleoside-triphosphatase THEP1 (169 aa).

ATP-binding positions include 11–18 (GEPGVGKT) and 100–107 (IIGIDEIG).

It belongs to the THEP1 NTPase family.

It catalyses the reaction a ribonucleoside 5'-triphosphate + H2O = a ribonucleoside 5'-diphosphate + phosphate + H(+). Its function is as follows. Has nucleotide phosphatase activity towards ATP, GTP, CTP, TTP and UTP. May hydrolyze nucleoside diphosphates with lower efficiency. The protein is Nucleoside-triphosphatase THEP1 of Sulfurisphaera tokodaii (strain DSM 16993 / JCM 10545 / NBRC 100140 / 7) (Sulfolobus tokodaii).